A 104-amino-acid polypeptide reads, in one-letter code: Pyrimidine/purine nucleoside phosphorylase (104 aa).

The protein belongs to the nucleoside phosphorylase PpnP family.

It carries out the reaction a purine D-ribonucleoside + phosphate = a purine nucleobase + alpha-D-ribose 1-phosphate. The catalysed reaction is adenosine + phosphate = alpha-D-ribose 1-phosphate + adenine. The enzyme catalyses cytidine + phosphate = cytosine + alpha-D-ribose 1-phosphate. It catalyses the reaction guanosine + phosphate = alpha-D-ribose 1-phosphate + guanine. It carries out the reaction inosine + phosphate = alpha-D-ribose 1-phosphate + hypoxanthine. The catalysed reaction is thymidine + phosphate = 2-deoxy-alpha-D-ribose 1-phosphate + thymine. The enzyme catalyses uridine + phosphate = alpha-D-ribose 1-phosphate + uracil. It catalyses the reaction xanthosine + phosphate = alpha-D-ribose 1-phosphate + xanthine. In terms of biological role, catalyzes the phosphorolysis of diverse nucleosides, yielding D-ribose 1-phosphate and the respective free bases. Can use uridine, adenosine, guanosine, cytidine, thymidine, inosine and xanthosine as substrates. Also catalyzes the reverse reactions. This Geobacter sulfurreducens (strain ATCC 51573 / DSM 12127 / PCA) protein is Pyrimidine/purine nucleoside phosphorylase.